The chain runs to 526 residues: Methane monooxygenase component A alpha chain (526 aa).

Fe cation is bound by residues E114, E144, and H147. Residue C151 is part of the active site. 3 residues coordinate Fe cation: E209, E243, and H246.

The protein belongs to the TmoA/XamoA family. As to quaternary structure, m.trichosporium has two forms of methane monooxygenase, a soluble and a membrane-bound type. The soluble type consists of four components (A to D): protein A, comprising three chains, in an alpha-2, beta-2, gamma-2 configuration, is a nonheme iron protein containing an unusual mu-hydroxo bridge structure at its active site and interacts with both oxygen and methane. Fe cation is required as a cofactor.

The enzyme catalyses methane + NADH + O2 + H(+) = methanol + NAD(+) + H2O. It catalyses the reaction methane + NADPH + O2 + H(+) = methanol + NADP(+) + H2O. Its function is as follows. Responsible for the initial oxygenation of methane to methanol in methanotrophs. It also catalyzes the monohydroxylation of a variety of unactivated alkenes, alicyclic, aromatic and heterocyclic compounds. The protein is Methane monooxygenase component A alpha chain (mmoX) of Methylosinus trichosporium.